Reading from the N-terminus, the 456-residue chain is UDP-N-acetylmuramate--L-alanine ligase (456 aa).

112–118 serves as a coordination point for ATP; sequence GAHGKTS.

Belongs to the MurCDEF family.

It localises to the cytoplasm. The enzyme catalyses UDP-N-acetyl-alpha-D-muramate + L-alanine + ATP = UDP-N-acetyl-alpha-D-muramoyl-L-alanine + ADP + phosphate + H(+). Its pathway is cell wall biogenesis; peptidoglycan biosynthesis. Cell wall formation. The chain is UDP-N-acetylmuramate--L-alanine ligase from Desulforapulum autotrophicum (strain ATCC 43914 / DSM 3382 / VKM B-1955 / HRM2) (Desulfobacterium autotrophicum).